The chain runs to 747 residues: Sex-specific storage-protein 1 (747 aa).

Positions 1–15 are cleaved as a signal peptide; it reads MRVLVLLACLAAASA. Asparagine 494 and asparagine 706 each carry an N-linked (GlcNAc...) asparagine glycan.

It belongs to the hemocyanin family. As to expression, fat body.

It is found in the secreted. The protein localises to the extracellular space. In terms of biological role, larval storage protein (LSP) which may serve as a store of amino acids for synthesis of adult proteins. This Bombyx mori (Silk moth) protein is Sex-specific storage-protein 1 (SP1).